The following is a 257-amino-acid chain: UPF0246 protein BF4021 (257 aa).

This sequence belongs to the UPF0246 family.

The protein is UPF0246 protein BF4021 of Bacteroides fragilis (strain YCH46).